Reading from the N-terminus, the 473-residue chain is Ribosomal RNA small subunit methyltransferase F (473 aa).

S-adenosyl-L-methionine contacts are provided by residues 123–129 (AAAPGSK), glutamate 147, aspartate 174, and aspartate 192. The Nucleophile role is filled by cysteine 245.

It belongs to the class I-like SAM-binding methyltransferase superfamily. RsmB/NOP family.

The protein localises to the cytoplasm. It catalyses the reaction cytidine(1407) in 16S rRNA + S-adenosyl-L-methionine = 5-methylcytidine(1407) in 16S rRNA + S-adenosyl-L-homocysteine + H(+). Its function is as follows. Specifically methylates the cytosine at position 1407 (m5C1407) of 16S rRNA. This Vibrio atlanticus (strain LGP32) (Vibrio splendidus (strain Mel32)) protein is Ribosomal RNA small subunit methyltransferase F.